We begin with the raw amino-acid sequence, 175 residues long: MTTIITVRKGGKVVMAGDGQVSLGQTVMKGNARKVRRIGKGDVIAGFAGATADAFTLLERLEKKLEQYPGQLMRAAVELAKDWRTDKYLRNLEAMMLVADKSITLAITGNGDVLEPEHGTTAIGSGGNFAFAAARALMDTDKPAEEIARRALDIAADICVYTNHNIVVELLDVES.

Thr-2 is an active-site residue. Na(+) contacts are provided by Ala-156, Cys-159, and Thr-162.

It belongs to the peptidase T1B family. HslV subfamily. In terms of assembly, a double ring-shaped homohexamer of HslV is capped on each side by a ring-shaped HslU homohexamer. The assembly of the HslU/HslV complex is dependent on binding of ATP.

Its subcellular location is the cytoplasm. The enzyme catalyses ATP-dependent cleavage of peptide bonds with broad specificity.. Allosterically activated by HslU binding. Functionally, protease subunit of a proteasome-like degradation complex believed to be a general protein degrading machinery. In Rhizobium etli (strain ATCC 51251 / DSM 11541 / JCM 21823 / NBRC 15573 / CFN 42), this protein is ATP-dependent protease subunit HslV.